Reading from the N-terminus, the 149-residue chain is Putative pre-16S rRNA nuclease (149 aa).

The protein belongs to the YqgF nuclease family.

It localises to the cytoplasm. Its function is as follows. Could be a nuclease involved in processing of the 5'-end of pre-16S rRNA. This chain is Putative pre-16S rRNA nuclease, found in Cupriavidus metallidurans (strain ATCC 43123 / DSM 2839 / NBRC 102507 / CH34) (Ralstonia metallidurans).